Here is a 534-residue protein sequence, read N- to C-terminus: Melanopsin-B (534 aa).

The Extracellular portion of the chain corresponds to 1–32 (MDLGKTVEYGTHRQDAIAQIDVPDQVLYTIGS). A helical transmembrane segment spans residues 33 to 53 (FILIIGSVGIIGNMLVLYAFY). Residues 54–64 (RNKKLRTAPNY) lie on the Cytoplasmic side of the membrane. A helical transmembrane segment spans residues 65-85 (FIINLAISDFLMSATQAPVCF). Residues 86–102 (LSSLHREWILGDIGCNV) lie on the Extracellular side of the membrane. Residues Cys100 and Cys178 are joined by a disulfide bond. A helical membrane pass occupies residues 103–123 (YAFCGALFGITSMMTLLAISI). Residues 124 to 146 (NRYIVITKPLQSIQWSSKKRTSQ) are Cytoplasmic-facing. The helical transmembrane segment at 147-167 (IIVLVWMYSLMWSLAPLLGWS) threads the bilayer. Residues 168–198 (SYVPEGLRISCTWDYVTSTMSNRSYTMMLCC) lie on the Extracellular side of the membrane. An N-linked (GlcNAc...) asparagine glycan is attached at Asn189. The chain crosses the membrane as a helical span at residues 199-219 (CVFFIPLIVISHCYLFMFLAI). Topologically, residues 220–250 (RSTGRNVQKLGSYGRQSFLSQSMKNEWKMAK) are cytoplasmic. A helical transmembrane segment spans residues 251-271 (IAFVIIIVFVLSWSPYACVTL). Residues 272-286 (IAWAGHGKSLTPYSK) are Extracellular-facing. Residues 287-307 (TVPAVIAKASAIYNPIIYGII) form a helical membrane-spanning segment. The residue at position 294 (Lys294) is an N6-(retinylidene)lysine. Residues 308–534 (HPKYRETIHK…LYEVVERFLS (227 aa)) are Cytoplasmic-facing. Residues 478 to 501 (SNISETKEEHDNNSEEKSKRTEEE) are disordered. The segment covering 482–499 (ETKEEHDNNSEEKSKRTE) has biased composition (basic and acidic residues).

Belongs to the G-protein coupled receptor 1 family. Opsin subfamily. In terms of tissue distribution, highest level in the iris, high level in the inner nuclear layer, possibly in horizontal cells, and lowest level in retinal pigment epithelium. Expressed in melanophore cells of the skin.

Its subcellular location is the cell membrane. Photoreceptor implicated in non-image-forming responses to light. May be able to isomerize covalently bound all-trans retinal back to 11-cis retinal. The sequence is that of Melanopsin-B from Xenopus laevis (African clawed frog).